Reading from the N-terminus, the 196-residue chain is dCTP deaminase, dUMP-forming (196 aa).

DCTP contacts are provided by residues 101–106 (KSSLGR), D119, 127–129 (TLE), Q148, Y162, and Q174. The Proton donor/acceptor role is filled by E129.

Belongs to the dCTP deaminase family. As to quaternary structure, homotrimer.

The enzyme catalyses dCTP + 2 H2O = dUMP + NH4(+) + diphosphate. It participates in pyrimidine metabolism; dUMP biosynthesis; dUMP from dCTP: step 1/1. In terms of biological role, bifunctional enzyme that catalyzes both the deamination of dCTP to dUTP and the hydrolysis of dUTP to dUMP without releasing the toxic dUTP intermediate. This chain is dCTP deaminase, dUMP-forming, found in Thermobifida fusca (strain YX).